The following is a 456-amino-acid chain: Putrescine--pyruvate aminotransferase (456 aa).

Substrate is bound at residue Tyr156. Asp262 contributes to the pyridoxal 5'-phosphate binding site. Lys291 carries the N6-(pyridoxal phosphate)lysine modification. Substrate is bound by residues Gly322 and Arg417.

The protein belongs to the class-III pyridoxal-phosphate-dependent aminotransferase family. It depends on pyridoxal 5'-phosphate as a cofactor.

The catalysed reaction is putrescine + pyruvate = 4-aminobutanal + L-alanine. The protein operates within amine and polyamine degradation; putrescine degradation; 4-aminobutanal from putrescine (transaminase route). Involved in the putrescine catabolism. Catalyzes the transfer of the amino group from putrescine to pyruvate to yield 4-aminobutanal and alanine. The polypeptide is Putrescine--pyruvate aminotransferase (Pseudomonas aeruginosa (strain ATCC 15692 / DSM 22644 / CIP 104116 / JCM 14847 / LMG 12228 / 1C / PRS 101 / PAO1)).